Here is a 141-residue protein sequence, read N- to C-terminus: Hemoglobin subunit alpha (141 aa).

A Globin domain is found at 1 to 141; the sequence is VLSPADKSNV…VSTVLTSKYR (141 aa). S3 is subject to Phosphoserine. N6-succinyllysine is present on residues K7 and K11. K16 carries the post-translational modification N6-acetyllysine; alternate. N6-succinyllysine; alternate is present on K16. Position 24 is a phosphotyrosine (Y24). S35 bears the Phosphoserine mark. Residue K40 is modified to N6-succinyllysine. S49 carries the phosphoserine modification. H58 is an O2 binding site. H87 contacts heme b. S102 carries the phosphoserine modification. T108 carries the phosphothreonine modification. 2 positions are modified to phosphoserine: S124 and S131. Phosphothreonine is present on residues T134 and T137. A Phosphoserine modification is found at S138.

It belongs to the globin family. As to quaternary structure, heterotetramer of two alpha chains and two beta chains. Red blood cells.

Involved in oxygen transport from the lung to the various peripheral tissues. In terms of biological role, hemopressin acts as an antagonist peptide of the cannabinoid receptor CNR1. Hemopressin-binding efficiently blocks cannabinoid receptor CNR1 and subsequent signaling. The polypeptide is Hemoglobin subunit alpha (HBA) (Mico argentatus (Silvery marmoset)).